We begin with the raw amino-acid sequence, 213 residues long: Glycerol-3-phosphate acyltransferase (213 aa).

6 consecutive transmembrane segments (helical) span residues 3–23 (ILLLILIAYLLGSIQTGLWIG), 54–76 (TITFLVDMLKGTLAVLLPIWLGI), 83–100 (IIGFFAIIGHVFPFFTGF), 110–130 (AGVLLGFVPLYFVFLLLVFAL), 142–162 (SITAAVVGLITLATFPAIHFL), and 163–183 (LDGYDPIFSAVLIIIVLVIIF).

This sequence belongs to the PlsY family. As to quaternary structure, probably interacts with PlsX.

It is found in the cell membrane. The enzyme catalyses an acyl phosphate + sn-glycerol 3-phosphate = a 1-acyl-sn-glycero-3-phosphate + phosphate. It functions in the pathway lipid metabolism; phospholipid metabolism. Its function is as follows. Catalyzes the transfer of an acyl group from acyl-phosphate (acyl-PO(4)) to glycerol-3-phosphate (G3P) to form lysophosphatidic acid (LPA). This enzyme utilizes acyl-phosphate as fatty acyl donor, but not acyl-CoA or acyl-ACP. The polypeptide is Glycerol-3-phosphate acyltransferase (Streptococcus thermophilus (strain ATCC BAA-491 / LMD-9)).